The primary structure comprises 157 residues: 6,7-dimethyl-8-ribityllumazine synthase 1 (157 aa).

Residues Phe22, 53-55 (ALE), and 82-84 (TVI) contribute to the 5-amino-6-(D-ribitylamino)uracil site. Residue 87-88 (ET) participates in (2S)-2-hydroxy-3-oxobutyl phosphate binding. The active-site Proton donor is His90. Residue Asn115 coordinates 5-amino-6-(D-ribitylamino)uracil. Arg129 provides a ligand contact to (2S)-2-hydroxy-3-oxobutyl phosphate.

Belongs to the DMRL synthase family. As to quaternary structure, homopentamer.

The enzyme catalyses (2S)-2-hydroxy-3-oxobutyl phosphate + 5-amino-6-(D-ribitylamino)uracil = 6,7-dimethyl-8-(1-D-ribityl)lumazine + phosphate + 2 H2O + H(+). The protein operates within cofactor biosynthesis; riboflavin biosynthesis; riboflavin from 2-hydroxy-3-oxobutyl phosphate and 5-amino-6-(D-ribitylamino)uracil: step 1/2. Functionally, catalyzes the formation of 6,7-dimethyl-8-ribityllumazine by condensation of 5-amino-6-(D-ribitylamino)uracil with 3,4-dihydroxy-2-butanone 4-phosphate. This is the penultimate step in the biosynthesis of riboflavin. The protein is 6,7-dimethyl-8-ribityllumazine synthase 1 (ribH1) of Brucella melitensis biotype 1 (strain ATCC 23456 / CCUG 17765 / NCTC 10094 / 16M).